The following is a 181-amino-acid chain: Proteinase inhibitor B (181 aa).

The first 24 residues, Met-1 to Gly-24, serve as a signal peptide directing secretion. 3 cysteine pairs are disulfide-bonded: Cys-67–Cys-113, Cys-134–Cys-143, and Cys-136–Cys-139.

This sequence belongs to the protease inhibitor I3 (leguminous Kunitz-type inhibitor) family.

It is found in the secreted. In terms of biological role, possesses two reactive sites. Inhibits two molecules of trypsin simultaneously. Inhibits efficiently kallikrein, but chymotrypsin weakly. The polypeptide is Proteinase inhibitor B (Sagittaria sagittifolia (Arrowhead)).